A 338-amino-acid chain; its full sequence is Aspartate--ammonia ligase (338 aa).

Belongs to the class-II aminoacyl-tRNA synthetase family. AsnA subfamily.

It is found in the cytoplasm. It catalyses the reaction L-aspartate + NH4(+) + ATP = L-asparagine + AMP + diphosphate + H(+). It functions in the pathway amino-acid biosynthesis; L-asparagine biosynthesis; L-asparagine from L-aspartate (ammonia route): step 1/1. The protein is Aspartate--ammonia ligase of Lactobacillus delbrueckii subsp. bulgaricus (strain ATCC 11842 / DSM 20081 / BCRC 10696 / JCM 1002 / NBRC 13953 / NCIMB 11778 / NCTC 12712 / WDCM 00102 / Lb 14).